The following is a 467-amino-acid chain: 3-isopropylmalate dehydratase large subunit (467 aa).

3 residues coordinate [4Fe-4S] cluster: Cys349, Cys408, and Cys411.

Belongs to the aconitase/IPM isomerase family. LeuC type 1 subfamily. As to quaternary structure, heterodimer of LeuC and LeuD. [4Fe-4S] cluster is required as a cofactor.

It catalyses the reaction (2R,3S)-3-isopropylmalate = (2S)-2-isopropylmalate. Its pathway is amino-acid biosynthesis; L-leucine biosynthesis; L-leucine from 3-methyl-2-oxobutanoate: step 2/4. Its function is as follows. Catalyzes the isomerization between 2-isopropylmalate and 3-isopropylmalate, via the formation of 2-isopropylmaleate. This Dinoroseobacter shibae (strain DSM 16493 / NCIMB 14021 / DFL 12) protein is 3-isopropylmalate dehydratase large subunit.